The primary structure comprises 573 residues: MFTTPLPPQKRLSTQTEAIAKNITAIRSLDWDRDRFDIEFGLQNGTTYNSYLIQADKVALVDSSHEKFRQLYLDLLQGLIDPQRIDYLIVSHTEPDHSGLVKDILQLNPRITVVATKVALQFLDNFVHQPFERIQVKSGDRLDLGQGHDLEFVSAPNLHWPDTMLTYDPATEILFTCDVFGMHYCSDAVFDIDLGKIAPDYQFYYDCLMGPNARSVLAAMKRMDNLGTISTVANGHGPLLRHNVGELLHRYRHWSESQSKAEKTVVVFYVADYGYGDRLSQAIAKGITKTGVGVDMVDLSSADPQEIQELVGHASGVVLGMPPLQANADLSTNFGAVLAAMQPKQVFGLYESYGGDDEPIDPLRTKFLDLGLREAFKVIKVKDTPSESTYQLCDESGTDLGQNLIQAAKIKQLKSLDSDLEKAIGRISGGLYIITAQKGEVKGAMLASWVSQASFNPPGFTVAVAKDRAIESLMQVGDRFVLNILEEGNYQILMKHFLKRFPPGADRFAGVKTQTASNGSPILTDALAYLECEVASRMECSDHWIVYSQVTNGRVAKAEGLTAVHHRKVGNYY.

A zinc metallo-hydrolase region spans residues 43 to 236 (QNGTTYNSYL…GTISTVANGH (194 aa)). H92, E94, D96, H159, D178, and H236 together coordinate Fe cation. The Flavodoxin-like domain occupies 265-401 (VVVFYVADYG…LCDESGTDLG (137 aa)). Residues 424 to 573 (IGRISGGLYI…VHHRKVGNYY (150 aa)) form a flavodoxin-reductase-like region.

It in the N-terminal section; belongs to the zinc metallo-hydrolase group 3 family. In the C-terminal section; belongs to the flavodoxin reductase family. Homodimer. The cofactor is Fe cation. Requires FAD as cofactor. FMN is required as a cofactor.

Functionally, mediates electron transfer from NADH to oxygen, reducing it to water. This modular protein has 3 redox cofactors, in other organisms the same activity requires 2 or 3 proteins. This is Diflavin flavoprotein A 1 (dfa1) from Synechocystis sp. (strain ATCC 27184 / PCC 6803 / Kazusa).